The primary structure comprises 725 residues: MSADSKVWAHASADTWTTAQGISTYDLDTSSIKREKIDCHEQFNDGYGPPPGTASTDAVSYAADPTAYFNLYTNMGAAPTTTPMMHHEMGEAMKRDKEAIYAHPLYPLLVVLFEKCELATSTPRETSRDGTTSSDVCSSASFKDDLNEFVKHTQENADKQYYQPNPQLDQIMLQSIQMLRFHLLELEKVHELCDNFCNRYVTCLKGKMPLDIVGDERASSSQPPMSPGSMGHHGHSGSPSMGGAGAATPMHYPPPYEPQSVPLPENVLGGGHPLEMFPGSSMAYAMAGMAAAAASSSSSQPQPGDHPLANGGTLHSTAGASQTLLPIAVSSPSTCSSGGLRQDSTPLSGETPMANGNSMDSISEAERIRRRFYMCVIVSAGPSSSSLHQHHLHHPHHFPHHQLQPPAHHQDFLLPPPPQNIIEQSLHCAGVSMLDASLIPPSSSSSASEYHGDMMSHMYSHHDVYHHQDMTYTDYGDYGTPDVVMMSSSDVKMEDAASVSSSKSGGKKQQPGTPNGRVGKSRGRDEFSVCGSNEDGRDSVLSDSANGSQNGKRKVPKVFSKEAITKFRAWLFQNLAHPYPSEEQKKQLAKETGLTILQVNNWFINARRRIVQPMIDQNNRAGRTPHMNVCKNRRRNRSEQSPGPSPDSESDSGANYSPDPTSLAAATAMHYPGAELYMQRTMNYGGFQPFPNPAMQFMNPMMGFPVAPAVDAISQQWIDLSAPHE.

The region spanning S133 to A218 is the MEIS N-terminal domain. 6 disordered regions span residues G214 to P258, S295 to T317, V329 to M359, S386 to Q419, V491 to V555, and I615 to T661. The segment covering S219–P239 has biased composition (low complexity). Positions H388 to H400 are enriched in basic residues. Residues S498–K508 show a composition bias toward low complexity. The span at L541–N550 shows a compositional bias: polar residues. Positions K552–M614 form a DNA-binding region, homeobox; TALE-type.

It belongs to the TALE/MEIS homeobox family.

The protein resides in the nucleus. Its function is as follows. Acts redundantly with ceh-20 and ceh-40 to perform overlapping roles during embryogenesis. Required for postembryonic development of the ectoderm, including the Q, V and P cell lineages, playing a crucial role in ensuring that these cells and their descendants undergo their invariant patterns of cell division, migration, fusion and morphogenesis. Has a role in the mig-13 pathway to promote anterior migration of neuroblasts in the Q lineage. Required for multiple roles in regulating vulva development. The chain is Homeobox protein unc-62 (unc-62) from Caenorhabditis briggsae.